Consider the following 98-residue polypeptide: NADH-ubiquinone oxidoreductase chain 4L (98 aa).

The next 3 helical transmembrane spans lie at 1-21, 29-49, and 61-81; these read MPST…GLLL, SLLC…LMAL, and IVLM…LVMV.

The protein belongs to the complex I subunit 4L family. In terms of assembly, core subunit of respiratory chain NADH dehydrogenase (Complex I) which is composed of 45 different subunits.

It is found in the mitochondrion inner membrane. It carries out the reaction a ubiquinone + NADH + 5 H(+)(in) = a ubiquinol + NAD(+) + 4 H(+)(out). Core subunit of the mitochondrial membrane respiratory chain NADH dehydrogenase (Complex I) which catalyzes electron transfer from NADH through the respiratory chain, using ubiquinone as an electron acceptor. Part of the enzyme membrane arm which is embedded in the lipid bilayer and involved in proton translocation. The polypeptide is NADH-ubiquinone oxidoreductase chain 4L (MT-ND4L) (Choloepus didactylus (Southern two-toed sloth)).